The chain runs to 280 residues: Golgi to ER traffic protein 2 (280 aa).

Topologically, residues 1–149 (MPSDREKQRI…IAYNLYQQRK (149 aa)) are cytoplasmic. Residues 15-59 (RQAKMAKGGASDRLNKILSQGSSVKTSAVSVLDQPQPADHDPEGM) are disordered. The span at 31–43 (ILSQGSSVKTSAV) shows a compositional bias: polar residues. Residues 150–170 (VRHRFLVVRMVSILANFVYHF) traverse the membrane as a helical segment. Residues 171-197 (LTISDFSFSPSANPFIRSIPPTSSVSS) are Lumenal-facing. Residues 198-217 (FFQIFVAIEAVLVAAYIAAS) form a helical membrane-spanning segment. Residues 218-257 (RNVPSNNNGLLVKGISMAAMFVPKLQRFQPLIMKIIGCWD) lie on the Cytoplasmic side of the membrane. The helical transmembrane segment at 258–278 (TVTFVLNDLGLVVLLFGLISF) threads the bilayer. Residues 279–280 (RR) lie on the Lumenal side of the membrane.

Belongs to the GET2 family. In terms of assembly, component of the Golgi to ER traffic (GET) complex, which is composed of GET1, GET2 and GET3. Within the complex, GET1 and GET2 form a heterotetramer which is stabilized by phosphatidylinositol binding and which binds to the GET3 homodimer.

The protein resides in the endoplasmic reticulum membrane. It localises to the golgi apparatus membrane. Its function is as follows. Required for the post-translational delivery of tail-anchored (TA) proteins to the endoplasmic reticulum. Together with GET1, acts as a membrane receptor for soluble GET3, which recognizes and selectively binds the transmembrane domain of TA proteins in the cytosol. The GET complex cooperates with the HDEL receptor ERD2 to mediate the ATP-dependent retrieval of resident ER proteins that contain a C-terminal H-D-E-L retention signal from the Golgi to the ER. The protein is Golgi to ER traffic protein 2 of Meyerozyma guilliermondii (strain ATCC 6260 / CBS 566 / DSM 6381 / JCM 1539 / NBRC 10279 / NRRL Y-324) (Yeast).